Here is a 463-residue protein sequence, read N- to C-terminus: Glutamate--tRNA ligase (463 aa).

The 'HIGH' region signature appears at 10–20; that stretch reads PSPTGHLHIGG. Residues 236 to 240 carry the 'KMSKS' region motif; that stretch reads KLSKR. K239 contributes to the ATP binding site.

This sequence belongs to the class-I aminoacyl-tRNA synthetase family. Glutamate--tRNA ligase type 1 subfamily. Monomer.

The protein resides in the cytoplasm. It carries out the reaction tRNA(Glu) + L-glutamate + ATP = L-glutamyl-tRNA(Glu) + AMP + diphosphate. In terms of biological role, catalyzes the attachment of glutamate to tRNA(Glu) in a two-step reaction: glutamate is first activated by ATP to form Glu-AMP and then transferred to the acceptor end of tRNA(Glu). This is Glutamate--tRNA ligase from Nitratidesulfovibrio vulgaris (strain ATCC 29579 / DSM 644 / CCUG 34227 / NCIMB 8303 / VKM B-1760 / Hildenborough) (Desulfovibrio vulgaris).